The chain runs to 320 residues: Tetraspanin-32 (320 aa).

The next 4 membrane-spanning stretches (helical) occupy residues 14-34 (MLVTCFFILLLGLSVATMVTL), 60-80 (WAFSAGLSLVGLLTLGAVLSA), 90-110 (LMAGGFLCFSLAFCAQVQVVF), and 203-223 (SIGLALTVSALLFSSFLWFAI).

It belongs to the tetraspanin (TM4SF) family. As to expression, expressed ubiquitously at low levels. High levels of expression are confined to hematopoietic tissues including peripheral blood leukocytes, thymus and spleen.

It localises to the membrane. The chain is Tetraspanin-32 (TSPAN32) from Homo sapiens (Human).